We begin with the raw amino-acid sequence, 131 residues long: Small ribosomal subunit protein uS8 (131 aa).

It belongs to the universal ribosomal protein uS8 family. Part of the 30S ribosomal subunit. Contacts proteins S5 and S12.

Its function is as follows. One of the primary rRNA binding proteins, it binds directly to 16S rRNA central domain where it helps coordinate assembly of the platform of the 30S subunit. The sequence is that of Small ribosomal subunit protein uS8 from Shewanella amazonensis (strain ATCC BAA-1098 / SB2B).